A 289-amino-acid chain; its full sequence is Cell division protein ZipA (289 aa).

Position 1 (Met-1) is a topological domain, periplasmic. A helical membrane pass occupies residues 2-22 (EIGLREWLIVIGIIVIAGILF). Residues 23–289 (DGWRRMRGSK…ERRALTQRRG (267 aa)) lie on the Cytoplasmic side of the membrane. The segment at 48 to 141 (DEEETTSAEV…KPAQRITEDK (94 aa)) is disordered. Composition is skewed to basic and acidic residues over residues 64–77 (LDTHKEPQLDEHDL), 85–106 (REGKRSNSDKRGNSDKKRKDEP), and 123–141 (GRDDDFPDDKPAQRITEDK).

The protein belongs to the ZipA family. As to quaternary structure, interacts with FtsZ via their C-terminal domains.

It is found in the cell inner membrane. In terms of biological role, essential cell division protein that stabilizes the FtsZ protofilaments by cross-linking them and that serves as a cytoplasmic membrane anchor for the Z ring. Also required for the recruitment to the septal ring of downstream cell division proteins. The chain is Cell division protein ZipA from Pseudomonas savastanoi pv. phaseolicola (strain 1448A / Race 6) (Pseudomonas syringae pv. phaseolicola (strain 1448A / Race 6)).